A 301-amino-acid chain; its full sequence is Acetylglutamate kinase (301 aa).

Substrate is bound by residues 68–69, arginine 90, and asparagine 195; that span reads GG.

It belongs to the acetylglutamate kinase family. ArgB subfamily.

It localises to the cytoplasm. The catalysed reaction is N-acetyl-L-glutamate + ATP = N-acetyl-L-glutamyl 5-phosphate + ADP. Its pathway is amino-acid biosynthesis; L-arginine biosynthesis; N(2)-acetyl-L-ornithine from L-glutamate: step 2/4. Catalyzes the ATP-dependent phosphorylation of N-acetyl-L-glutamate. This Pseudomonas fluorescens (strain SBW25) protein is Acetylglutamate kinase.